A 187-amino-acid chain; its full sequence is Probable cobalt-precorrin-6B C(15)-methyltransferase (decarboxylating) (187 aa).

Residues threonine 15, 39–43 (GSCTG), glutamate 60, and alanine 89 contribute to the S-adenosyl-L-methionine site.

Belongs to the methyltransferase superfamily. Archaeal-type CbiT family.

It carries out the reaction Co-precorrin-6B + S-adenosyl-L-methionine = Co-precorrin-7 + S-adenosyl-L-homocysteine + CO2. Its pathway is cofactor biosynthesis; adenosylcobalamin biosynthesis; cob(II)yrinate a,c-diamide from sirohydrochlorin (anaerobic route): step 8/10. Catalyzes the methylation of C-15 in cobalt-precorrin-6B followed by the decarboxylation of C-12 to form cobalt-precorrin-7. The sequence is that of Probable cobalt-precorrin-6B C(15)-methyltransferase (decarboxylating) from Halobacterium salinarum (strain ATCC 700922 / JCM 11081 / NRC-1) (Halobacterium halobium).